A 1462-amino-acid chain; its full sequence is MGQIFSRSASPIPRPPRGLAAHHWLNFLQAAYRLEPGPSSYDFHQLKKFLKIALETPVWICPINYSLLASLLPKGYPGRVNEILHILIQTQAQIPSRPAPPPPSSSTHDPPDSDPQIPPPYVEPTAPQVLPVMHPHGAPPNHRPWQMKDLQAIKQEVSQAAPGSPQFMQTIRLAVQQFDPTAKDLQDLLQYLCSSLVASLHHQQLDSLISEAETRGITGYNPLAGPLRVQANNPQQQGLRREYQQLWLAAFAALPGSAKDPSWASILQGLEEPYHAFVERLNIALDNGLPEGTPKDPILRSLAYSNANKECQKLLQARGHTNSPLGDMLRACQAWTPKDKTKVLVVQPKKPPPNQPCFRCGKAGHWSRDCTQPRPPPGPCPLCQDPTHWKRDCPRLKPTIPEPEPEEDALLLDLPADIPHPKNLHRGGGLTSPPTLQQVLPNQDPTSILPVIPLDPARRPVIKAQIDTQTSHPKTIEALLDTGADMTVLPIALFSSNTPLKNTSVLGAGGQTQDHFKLTSLPVLIRLPFRTTPIVLTSCLVDTKNNWAIIGRDALQQCQGVLYLPEAKRPPVILPIQAPAVLGLEHLPRPPEISQFPLNPERLQALQHLVRKALEAGHIEPYTGPGNNPVFPVKKANGTWRFIHDLRATNSLTIDLSSSSPGPPDLSSLPTTLAHLQTIDLKDAFFQIPLPKQFQPYFAFTVPQQCNYGPGTRYAWRVLPQGFKNSPTLFEMQLAHILQPIRQAFPQCTILQYMDDILLASPSHADLQLLSEATMASLISHGLPVSENKTQQTPGTIKFLGQIISPNHLTYDAVPKVPIRSRWALPELQALLGEIQWVSKGTPTLRQPLHSLYCALQRHTDPRDQIYLNPSQVQSLVQLRQALSQNCRSRLVQTLPLLGAIMLTLTGTTTVVFQSKQQWPLVWLHAPLPHTSQCPWGQLLASAVLLLDKYTLQSYGLLCQTIHHNISTQTFNQFIQTSDHPSVPILLHHSHRFKNLGAQTGELWNTFLKTTAPLAPVKALMPVFTLSPVIINTAPCLFSDGSTSQAAYILWDKHILSQRSFPLPPPHKSAQRAELLGLLHGLSSARSWRCLNIFLDSKYLYHYLRTLALGTFQGRSSQAPFQALLPRLLSRKVVYLHHVRSHTNLPDPISRLNALTDALLITPVLQLSPADLHSFTHCGQTALTLQGATTTEASNILRSCHACRKNNPQHQMPQGHIRRGLLPNHIWQGDITHFKYKNTLYRLHVWVDTFSGAISATQKRKETSSEAISSLLQAIAYLGKPSYINTDNGPAYISQDFLNMCTSLAIRHTTHVPYNPTSSGLVERSNGILKTLLYKYFTDKPDLPMDNALSIALWTINHLNVLTNCHKTRWQLHHSPRLQPIPETHSLSNKQTHWYYFKLPGLNSRQWKGPQEALQEAAGAALIPVSASSAQWIPWRLLKRAACPRPVGGPADPKEKDHQHHG.

Glycine 2 carries N-myristoyl glycine; by host lipidation. Positions 93-142 are disordered; it reads QIPSRPAPPPPSSSTHDPPDSDPQIPPPYVEPTAPQVLPVMHPHGAPPNH. A Phosphoserine; by host MAPK1 modification is found at serine 105. The PPXY motif motif lies at 118–121; the sequence is PPPY. The PTAP/PSAP motif signature appears at 124 to 127; the sequence is PTAP. CCHC-type zinc fingers lie at residues 355-372 and 378-395; these read QPCFRCGKAGHWSRDCTQ and GPCPLCQDPTHWKRDCPR. In terms of domain architecture, Peptidase A2 spans 476 to 554; it reads IEALLDTGAD…NNWAIIGRDA (79 aa). The active-site Protease; shared with dimeric partner is the aspartate 481. The Reverse transcriptase domain maps to 614 to 804; it reads LEAGHIEPYT…GTIKFLGQII (191 aa). The Mg(2+) site is built by aspartate 680, aspartate 755, aspartate 756, aspartate 1040, glutamate 1074, aspartate 1096, aspartate 1157, aspartate 1230, and aspartate 1287. Positions 1031 to 1165 constitute an RNase H type-1 domain; sequence INTAPCLFSD…TDALLITPVL (135 aa). One can recognise an Integrase catalytic domain in the interval 1219-1388; that stretch reads RGLLPNHIWQ…QPIPETHSLS (170 aa). The integrase-type DNA-binding region spans 1393 to 1443; it reads HWYYFKLPGLNSRQWKGPQEALQEAAGAALIPVSASSAQWIPWRLLKRAAC.

Homodimer; the homodimers are part of the immature particles. Interacts with human TSG101 and NEDD4; these interactions are essential for budding and release of viral particles. In terms of assembly, homodimer; further assembles as homohexamers. It depends on Mg(2+) as a cofactor. In terms of processing, phosphorylation of the matrix protein p19 by MAPK1 seems to play a role in budding. Myristoylated. Myristoylation of the matrix (MA) domain mediates the transport and binding of Gag polyproteins to the host plasma membrane and is required for the assembly of viral particles. Post-translationally, specific enzymatic cleavages by the viral protease yield mature proteins. The polyprotein is cleaved during and after budding, this process is termed maturation. The protease is autoproteolytically processed at its N- and C-termini.

It localises to the virion. It catalyses the reaction Endonucleolytic cleavage to 5'-phosphomonoester.. The enzyme catalyses DNA(n) + a 2'-deoxyribonucleoside 5'-triphosphate = DNA(n+1) + diphosphate. Its function is as follows. The matrix domain targets Gag, Gag-Pro and Gag-Pro-Pol polyproteins to the plasma membrane via a multipartite membrane binding signal, that includes its myristoylated N-terminus. In terms of biological role, matrix protein. Forms the spherical core of the virus that encapsulates the genomic RNA-nucleocapsid complex. Functionally, binds strongly to viral nucleic acids and promote their aggregation. Also destabilizes the nucleic acids duplexes via highly structured zinc-binding motifs. Its function is as follows. The aspartyl protease mediates proteolytic cleavages of Gag and Gag-Pol polyproteins during or shortly after the release of the virion from the plasma membrane. Cleavages take place as an ordered, step-wise cascade to yield mature proteins. This process is called maturation. Displays maximal activity during the budding process just prior to particle release from the cell (Potential). Cleaves the translation initiation factor eIF4G leading to the inhibition of host cap-dependent translation. In terms of biological role, RT is a multifunctional enzyme that converts the viral RNA genome into dsDNA in the cytoplasm, shortly after virus entry into the cell. This enzyme displays a DNA polymerase activity that can copy either DNA or RNA templates, and a ribonuclease H (RNase H) activity that cleaves the RNA strand of RNA-DNA heteroduplexes in a partially processive 3' to 5'-endonucleasic mode. Conversion of viral genomic RNA into dsDNA requires many steps. A tRNA-Pro binds to the primer-binding site (PBS) situated at the 5'-end of the viral RNA. RT uses the 3' end of the tRNA primer to perform a short round of RNA-dependent minus-strand DNA synthesis. The reading proceeds through the U5 region and ends after the repeated (R) region which is present at both ends of viral RNA. The portion of the RNA-DNA heteroduplex is digested by the RNase H, resulting in a ssDNA product attached to the tRNA primer. This ssDNA/tRNA hybridizes with the identical R region situated at the 3' end of viral RNA. This template exchange, known as minus-strand DNA strong stop transfer, can be either intra- or intermolecular. RT uses the 3' end of this newly synthesized short ssDNA to perform the RNA-dependent minus-strand DNA synthesis of the whole template. RNase H digests the RNA template except for a polypurine tract (PPT) situated at the 5' end of the genome. It is not clear if both polymerase and RNase H activities are simultaneous. RNase H probably can proceed both in a polymerase-dependent (RNA cut into small fragments by the same RT performing DNA synthesis) and a polymerase-independent mode (cleavage of remaining RNA fragments by free RTs). Secondly, RT performs DNA-directed plus-strand DNA synthesis using the PPT that has not been removed by RNase H as primer. PPT and tRNA primers are then removed by RNase H. The 3' and 5' ssDNA PBS regions hybridize to form a circular dsDNA intermediate. Strand displacement synthesis by RT to the PBS and PPT ends produces a blunt ended, linear dsDNA copy of the viral genome that includes long terminal repeats (LTRs) at both ends. Catalyzes viral DNA integration into the host chromosome, by performing a series of DNA cutting and joining reactions. This chain is Gag-Pro-Pol polyprotein (gag-pro-pol), found in Human T-cell leukemia virus 1 (isolate Caribbea HS-35 subtype A) (HTLV-1).